A 95-amino-acid chain; its full sequence is Co-chaperonin GroES (95 aa).

This sequence belongs to the GroES chaperonin family. In terms of assembly, heptamer of 7 subunits arranged in a ring. Interacts with the chaperonin GroEL.

The protein resides in the cytoplasm. Its function is as follows. Together with the chaperonin GroEL, plays an essential role in assisting protein folding. The GroEL-GroES system forms a nano-cage that allows encapsulation of the non-native substrate proteins and provides a physical environment optimized to promote and accelerate protein folding. GroES binds to the apical surface of the GroEL ring, thereby capping the opening of the GroEL channel. In Rickettsia rickettsii (strain Sheila Smith), this protein is Co-chaperonin GroES.